Consider the following 241-residue polypeptide: UPF0173 metal-dependent hydrolase Haur_4333 (241 aa).

It belongs to the UPF0173 family.

This chain is UPF0173 metal-dependent hydrolase Haur_4333, found in Herpetosiphon aurantiacus (strain ATCC 23779 / DSM 785 / 114-95).